The chain runs to 344 residues: Dihydroorotase (344 aa).

Residues His-14 and His-16 each contribute to the Zn(2+) site. Residues 16–18 and Asn-42 each bind substrate; that span reads HLR. Positions 99, 136, and 174 each coordinate Zn(2+). Lys-99 is modified (N6-carboxylysine). His-136 is a substrate binding site. Leu-219 serves as a coordination point for substrate. Asp-247 serves as a coordination point for Zn(2+). The active site involves Asp-247. Positions 251 and 263 each coordinate substrate.

Belongs to the metallo-dependent hydrolases superfamily. DHOase family. Class II DHOase subfamily. Homodimer. Zn(2+) serves as cofactor.

The catalysed reaction is (S)-dihydroorotate + H2O = N-carbamoyl-L-aspartate + H(+). It functions in the pathway pyrimidine metabolism; UMP biosynthesis via de novo pathway; (S)-dihydroorotate from bicarbonate: step 3/3. In terms of biological role, catalyzes the reversible cyclization of carbamoyl aspartate to dihydroorotate. This chain is Dihydroorotase, found in Teredinibacter turnerae (strain ATCC 39867 / T7901).